The chain runs to 24 residues: Humanin-like 1 (24 aa).

Belongs to the humanin family. As to expression, highly expressed in the kidney, heart muscle and testis.

Its subcellular location is the secreted. The protein localises to the cytoplasm. Functionally, plays a role as a neuroprotective and antiapoptotic factor. The protein is Humanin-like 1 of Homo sapiens (Human).